Here is an 81-residue protein sequence, read N- to C-terminus: Photosystem I iron-sulfur center (81 aa).

2 4Fe-4S ferredoxin-type domains span residues 2 to 31 (AHSV…MVPW) and 39 to 68 (IASA…VRVY). Cysteine 11, cysteine 14, cysteine 17, cysteine 21, cysteine 48, cysteine 51, cysteine 54, and cysteine 58 together coordinate [4Fe-4S] cluster.

The eukaryotic PSI reaction center is composed of at least 11 subunits. [4Fe-4S] cluster serves as cofactor.

It localises to the plastid. Its subcellular location is the chloroplast thylakoid membrane. It carries out the reaction reduced [plastocyanin] + hnu + oxidized [2Fe-2S]-[ferredoxin] = oxidized [plastocyanin] + reduced [2Fe-2S]-[ferredoxin]. Apoprotein for the two 4Fe-4S centers FA and FB of photosystem I (PSI); essential for photochemical activity. FB is the terminal electron acceptor of PSI, donating electrons to ferredoxin. The C-terminus interacts with PsaA/B/D and helps assemble the protein into the PSI complex. Required for binding of PsaD and PsaE to PSI. PSI is a plastocyanin-ferredoxin oxidoreductase, converting photonic excitation into a charge separation, which transfers an electron from the donor P700 chlorophyll pair to the spectroscopically characterized acceptors A0, A1, FX, FA and FB in turn. This chain is Photosystem I iron-sulfur center, found in Chlorokybus atmophyticus (Soil alga).